Consider the following 304-residue polypeptide: dTDP-4-dehydrorhamnose reductase (304 aa).

Residues 16-18, 42-43, and 66-68 contribute to the NADH site; these read GML, DI, and AWT. NADPH-binding positions include 17–18, 42–43, and 66–68; these read ML, DI, and AWT. A dTDP-beta-L-rhamnose-binding site is contributed by 107–108; it reads TD. The NADH site is built by Y131 and K135. NADPH-binding residues include Y131 and K135. The active-site Proton donor/acceptor is the Y131. Residue W157 participates in dTDP-beta-L-rhamnose binding.

It belongs to the dTDP-4-dehydrorhamnose reductase family. As to quaternary structure, homodimer. Mg(2+) is required as a cofactor.

It catalyses the reaction dTDP-beta-L-rhamnose + NADP(+) = dTDP-4-dehydro-beta-L-rhamnose + NADPH + H(+). It functions in the pathway carbohydrate biosynthesis; dTDP-L-rhamnose biosynthesis. It participates in antibiotic biosynthesis; streptomycin biosynthesis. Its function is as follows. Involved in the biosynthesis of the streptose moiety of streptomycin. Catalyzes the reduction of dTDP-6-deoxy-L-lyxo-4-hexulose to yield dTDP-L-rhamnose. RmlD uses NADH and NADPH nearly equally well. The chain is dTDP-4-dehydrorhamnose reductase from Streptomyces griseus.